A 675-amino-acid chain; its full sequence is PML-RARA-regulated adapter molecule 1 (675 aa).

Polar residues predominate over residues 1–19; that stretch reads MGSNQDFRNLQAKFQTSQP. Disordered stretches follow at residues 1 to 473 and 523 to 562; these read MGSN…GPIN and TDDSSISPRGRDEMLSTQQATRWPQQEPELRKKATQPQQL. Residues 23 to 35 show a composition bias toward basic and acidic residues; the sequence is ELFRKTPKPELNK. A compositionally biased stretch (polar residues) spans 43 to 58; the sequence is TELSEQPKKSSQSELS. The segment covering 141 to 150 has biased composition (basic and acidic residues); sequence PKPEFGELSK. Polar residues-rich tracts occupy residues 224–242, 251–264, and 322–331; these read RKSQPQSESIEVSQTSPSK, HSPQPDISTFPKNN, and LQPSDLTRAS. Ser374 is modified (phosphoserine). Over residues 407 to 422 the composition is skewed to polar residues; sequence SECSLPSASAGSSPQC. Pro residues predominate over residues 462 to 471; that stretch reads PAKPALPPGP. Residues 537–546 are compositionally biased toward polar residues; it reads LSTQQATRWP. The 79-residue stretch at 578–656 folds into the SH3 domain; it reads KAEREFRKKF…PRTALLPLET (79 aa).

Interacts with SKAP2, LCP2 and DBNL. May interact with LYN. Interacts with NEK6. May be phosphorylated on tyrosines. Expressed in bone marrow and mature neutrophils. Weakly expressed in macrophages and mast cells.

In terms of biological role, may be involved in integrin signaling in neutrophils. Binds to PtdIns(4)P. The protein is PML-RARA-regulated adapter molecule 1 (Pram1) of Mus musculus (Mouse).